Consider the following 235-residue polypeptide: MGDSQYSFSLTTFSPSGKLVQIEHALTAVGSGQTSLGIKASNGVVIATEKKLPSILVDEASVQKIQHLTPNIGVVYSGMGPDFRVLVRKSRKQAEQYLRLYKEPIPVTQLVRETATVMQEFTQSGGVRPFGVSLLVAGYDDKGPQLYQVDPSGSYFSWKASAMGKNVSNAKTFLEKRYTEDMELDDAIHTAILTLKEGFEGEISSKNIEIGKIGADKVFRVLTPAEIDDYLAEVE.

Residue Lys-64 forms a Glycyl lysine isopeptide (Lys-Gly) (interchain with G-Cter in ubiquitin) linkage.

This sequence belongs to the peptidase T1A family. As to quaternary structure, component of the 20S core complex of the 26S proteasome. The 26S proteasome is composed of a core protease (CP), known as the 20S proteasome, capped at one or both ends by the 19S regulatory particle (RP/PA700). The 20S proteasome core is composed of 28 subunits that are arranged in four stacked rings, resulting in a barrel-shaped structure. The two end rings are each formed by seven alpha subunits, and the two central rings are each formed by seven beta subunits. The catalytic chamber with the active sites is on the inside of the barrel.

The protein resides in the cytoplasm. It localises to the nucleus. Functionally, the proteasome is a multicatalytic proteinase complex which is characterized by its ability to cleave peptides with Arg, Phe, Tyr, Leu, and Glu adjacent to the leaving group at neutral or slightly basic pH. The proteasome has an ATP-dependent proteolytic activity. This chain is Proteasome subunit alpha type-2-A (PAB1), found in Arabidopsis thaliana (Mouse-ear cress).